We begin with the raw amino-acid sequence, 369 residues long: MELEARAEPRSPRAGRGEEEEDEDEELRLAKRRKVLCSEFAAVTSSDEAVASGFLAGSGWHLERALDAYFEAPMNEQTTAAAAGGGSAGPGSCIDLTADDTASNTSSSGADSKQQDDDSSFSLITWNIDGLDLGNLQERARGVCSYLALYSPDVVFLQEVIPPYLCILQRRAGGYTIIPGNVDGYFTAMLLKKPRVKVLKQEIIRFPTTSMMRNLLVVHVNISGNELCLMTSHLESTRDHSKERMKQLQIVLNKMQEESQSTTVIFGGDTNLRDSEVAKLGGLPKNITDIWEFLGKPQHCRYTWDTSSNTNLRIESKCKLRFDRLYFRPAAEGGHIIPRNMDLIGLEKLDCGRFPSDHWGLLCRFDVIL.

The segment covering M1–G17 has biased composition (basic and acidic residues). Disordered stretches follow at residues M1–E26 and A80–D117. Residues D99–S112 are compositionally biased toward low complexity. Residues N127 to L131 are interaction with 5' end of substrate DNA. Mg(2+) is bound by residues D129 and E159. Positions H233–R238 are interaction with 5' end of substrate DNA. Residue D269 is the Proton donor/acceptor of the active site. The tract at residues N271 to R273 is interaction with 5' end of substrate DNA.

It belongs to the CCR4/nocturin family. TTRAP/TDP2 subfamily. Mg(2+) serves as cofactor. Mn(2+) is required as a cofactor.

The protein localises to the nucleus. It is found in the PML body. DNA repair enzyme that can remove a variety of covalent adducts from DNA through hydrolysis of a 5'-phosphodiester bond, giving rise to DNA with a free 5' phosphate. Catalyzes the hydrolysis of dead-end complexes between DNA and the topoisomerase 2 (TOP2) active site tyrosine residue. Hydrolyzes 5'-phosphoglycolates on protruding 5' ends on DNA double-strand breaks (DSBs) due to DNA damage by radiation and free radicals. The 5'-tyrosyl DNA phosphodiesterase activity can enable the repair of TOP2-induced DSBs without the need for nuclease activity, creating a 'clean' DSB with 5'-phosphate termini that are ready for ligation. Also has 3'-tyrosyl DNA phosphodiesterase activity, but less efficiently and much slower than TDP1. The protein is Tyrosyl-DNA phosphodiesterase 2 (TDP2) of Gallus gallus (Chicken).